Reading from the N-terminus, the 224-residue chain is 7-cyano-7-deazaguanine synthase (224 aa).

10–20 is a binding site for ATP; that stretch reads LSGGLDSATVV. Positions 189, 199, 202, and 205 each coordinate Zn(2+).

It belongs to the QueC family. It depends on Zn(2+) as a cofactor.

The catalysed reaction is 7-carboxy-7-deazaguanine + NH4(+) + ATP = 7-cyano-7-deazaguanine + ADP + phosphate + H2O + H(+). The protein operates within purine metabolism; 7-cyano-7-deazaguanine biosynthesis. Functionally, catalyzes the ATP-dependent conversion of 7-carboxy-7-deazaguanine (CDG) to 7-cyano-7-deazaguanine (preQ(0)). This is 7-cyano-7-deazaguanine synthase from Pseudomonas fluorescens (strain SBW25).